A 104-amino-acid polypeptide reads, in one-letter code: Secreted RxLR effector protein 54 (104 aa).

The signal sequence occupies residues 1-19; sequence MIFTLLGLALVATKSACIA. Positions 52-55 match the RxLR motif; sequence RSLR. An N-linked (GlcNAc...) asparagine glycan is attached at asparagine 64.

Belongs to the RxLR effector family.

Its subcellular location is the secreted. The protein localises to the host chloroplast envelope. It localises to the host mitochondrion. It is found in the host nucleus. The protein resides in the host cytoplasm. Its function is as follows. Secreted effector that completely suppresses the host cell death induced by cell death-inducing proteins. The protein is Secreted RxLR effector protein 54 of Plasmopara viticola (Downy mildew of grapevine).